The following is a 631-amino-acid chain: Phosphomethylpyrimidine synthase (631 aa).

Substrate contacts are provided by residues asparagine 239, methionine 268, tyrosine 297, histidine 333, 353-355 (SRG), 394-397 (DGLR), and glutamate 433. Histidine 437 contributes to the Zn(2+) binding site. Tyrosine 460 lines the substrate pocket. Histidine 501 is a Zn(2+) binding site. Residues cysteine 581, cysteine 584, and cysteine 589 each contribute to the [4Fe-4S] cluster site.

Belongs to the ThiC family. As to quaternary structure, homodimer. [4Fe-4S] cluster is required as a cofactor.

The catalysed reaction is 5-amino-1-(5-phospho-beta-D-ribosyl)imidazole + S-adenosyl-L-methionine = 4-amino-2-methyl-5-(phosphooxymethyl)pyrimidine + CO + 5'-deoxyadenosine + formate + L-methionine + 3 H(+). Its pathway is cofactor biosynthesis; thiamine diphosphate biosynthesis. Functionally, catalyzes the synthesis of the hydroxymethylpyrimidine phosphate (HMP-P) moiety of thiamine from aminoimidazole ribotide (AIR) in a radical S-adenosyl-L-methionine (SAM)-dependent reaction. This is Phosphomethylpyrimidine synthase from Escherichia coli O7:K1 (strain IAI39 / ExPEC).